The following is a 706-amino-acid chain: MSSDTSPAVVTTPPPPSMPHKERYFDRINESDPEYLRERNMSPDLRQDFNMMEQRKRVTQILQSPAFREDLECLIQEQMKKGHNPSGLLALQQIADYIVTSSFSGFSSPSLSLGMVTPINDLPGADTSSYVKGEKLTRCKLASLYRLADLFGWAHLANTYISVRISKEQDHIIIIPRGLSFSEATASTLVKVNIIGEVVDQGSTDLKIDHTGFSPHAAIYSTRPDVKCVIHIHTLATAAVSSMKCGILPISQESLILGDVAYYDYQGSLDEEEERIELQKVLGPSCKVLVLRNHGMVALGETLEEAFHYIFNVQMACEIQVQAVAGAGGVDNLLVLDLQKYKAFTHGVAMSGGGGVNMASHQKWKVGEIEFEGLMRTLDNLGYRTGYAYRHPLVREKPRHKSDVEIPATVTAFSFEDDSAPLSPLKFMAQRQQREKTRWLNSPNTYMKVNVPEESRNGETSPRTKITWMKAEDSSKVSSGTPIKIEDPNQFVPLNTNPTEVLEKRNKIREQNRYDLKTAGPQSQLLAGIVVDKPPSTMQFDDDDQGPPAPPNPFSHLLEGELEEYTKTIERKQQGLDDAEQGSLSDDAASVSQIQSQTQSPQSVPERLEENHELFSKSFTSMDAPVMIMNGKDEMHDVEDELAQRVSRLTTSTTIENIEITIKSPERTEEVLSPDGSPSKSPSKKKKKFRTPSFLKKNKKKEKVEA.

A compositionally biased stretch (low complexity) spans 1 to 11 (MSSDTSPAVVT). The segment at 1–23 (MSSDTSPAVVTTPPPPSMPHKER) is disordered. An N-acetylserine modification is found at serine 2. Phosphoserine is present on residues serine 31, serine 42, serine 64, serine 402, serine 414, serine 423, serine 442, and serine 461. Disordered stretches follow at residues 471–495 (AEDS…VPLN), 534–556 (PPST…PFSH), 574–610 (QGLD…RLEE), and 651–706 (TSTT…KVEA). Lysine 484 participates in a covalent cross-link: Glycyl lysine isopeptide (Lys-Gly) (interchain with G-Cter in SUMO2). Phosphoserine is present on residues serine 583, serine 585, and serine 590. Low complexity-rich tracts occupy residues 590–605 (SVSQ…QSVP) and 651–662 (TSTTIENIEITI). 5 positions are modified to phosphoserine: serine 673, serine 677, serine 679, serine 681, and serine 683. Basic residues predominate over residues 682–706 (PSKKKKKFRTPSFLKKNKKKEKVEA). Residues 684–701 (KKKKKFRTPSFLKKNKKK) are interaction with calmodulin.

It belongs to the aldolase class II family. Adducin subfamily. As to quaternary structure, heterodimer of an alpha and a gamma subunit. Sumoylated. Post-translationally, proteolytically cleaved by asparagine endopeptidase (AEP) into 2 fragments. Overexpression of the 1-357 fragment induces neuronal apoptosis, and overexpression of either 1-357 or 358-706 fragment increases the degeneration of dendritic spines. Overexpression of the 1-357 fragment impairs neurite outgrowth by downregulating the expression of Rac2, and induces synaptic dysfunction and cognitive impairments in tau P301S transgenic mice, a mouse model for Alzheimer disease (AD). Cleavage fragment 1-357 is expressed in the brain and the expression increases with age (at protein level). The fragment is expressed in the cortex, hippocampal CA1 region and hippocampal dentate gyrus in tau P301S transgenic mice, a mouse model for Alzheimer disease (AD) (at protein level). The fragment is only weakly expressed in non-transgenic mouse brain sections (at protein level).

Its subcellular location is the cytoplasm. The protein resides in the cytoskeleton. It localises to the cell membrane. Functionally, membrane-cytoskeleton-associated protein that promotes the assembly of the spectrin-actin network. Plays a role in actin filament capping. Binds to calmodulin. Involved in myogenic reactivity of the renal afferent arteriole (Af-art), renal interlobular arteries and middle cerebral artery (MCA) to increased perfusion pressure. Involved in regulation of potassium channels in the vascular smooth muscle cells (VSMCs) of the Af-art and MCA ex vivo. Involved in regulation of glomerular capillary pressure, glomerular filtration rate (GFR) and glomerular nephrin expression in response to hypertension. Involved in renal blood flow (RBF) autoregulation. Plays a role in podocyte structure and function. Regulates globular monomer actin (G-actin) and filamentous polymer actin (F-actin) ratios in the primary podocytes affecting actin cytoskeleton organization. Regulates expression of synaptopodin, RhoA, Rac1 and CDC42 in the renal cortex and the primary podocytes. Regulates expression of nephrin in the glomeruli and in the primary podocytes, expression of nephrin and podocinin in the renal cortex, and expression of focal adhesion proteins integrin alpha-3 and integrin beta-1 in the glomeruli. Involved in cell migration and cell adhesion of podocytes, and in podocyte foot process effacement. Regulates expression of profibrotics markers MMP2, MMP9, TGF beta-1, tubular tight junction protein E-cadherin, and mesenchymal markers vimentin and alpha-SMA. Promotes the growth of neurites. The sequence is that of Gamma-adducin (Add3) from Mus musculus (Mouse).